Here is a 566-residue protein sequence, read N- to C-terminus: CTP synthase (566 aa).

Positions 1 to 265 are amidoligase domain; sequence MTKYVFVTGG…DEIVCHKLNL (265 aa). Ser13 is a CTP binding site. Ser13 lines the UTP pocket. ATP is bound by residues 14–19 and Asp71; that span reads SLGKGI. The Mg(2+) site is built by Asp71 and Glu139. CTP-binding positions include 146-148, 186-191, and Lys222; these read DIE and KTKPTQ. UTP is bound by residues 186–191 and Lys222; that span reads KTKPTQ. Positions 290–543 constitute a Glutamine amidotransferase type-1 domain; that stretch reads EIALVGKYVD…IEAAAVFADK (254 aa). Gly351 is a binding site for L-glutamine. Cys378 serves as the catalytic Nucleophile; for glutamine hydrolysis. Residues 379–382, Glu402, and Arg469 each bind L-glutamine; that span reads LGMQ. Residues His516 and Glu518 contribute to the active site. The disordered stretch occupies residues 545–566; the sequence is PSSEGAISADKPERTTTGAYIQ.

The protein belongs to the CTP synthase family. As to quaternary structure, homotetramer.

It catalyses the reaction UTP + L-glutamine + ATP + H2O = CTP + L-glutamate + ADP + phosphate + 2 H(+). The catalysed reaction is L-glutamine + H2O = L-glutamate + NH4(+). It carries out the reaction UTP + NH4(+) + ATP = CTP + ADP + phosphate + 2 H(+). It participates in pyrimidine metabolism; CTP biosynthesis via de novo pathway; CTP from UDP: step 2/2. With respect to regulation, allosterically activated by GTP, when glutamine is the substrate; GTP has no effect on the reaction when ammonia is the substrate. The allosteric effector GTP functions by stabilizing the protein conformation that binds the tetrahedral intermediate(s) formed during glutamine hydrolysis. Inhibited by the product CTP, via allosteric rather than competitive inhibition. Catalyzes the ATP-dependent amination of UTP to CTP with either L-glutamine or ammonia as the source of nitrogen. Regulates intracellular CTP levels through interactions with the four ribonucleotide triphosphates. This is CTP synthase from Nitrosospira multiformis (strain ATCC 25196 / NCIMB 11849 / C 71).